Reading from the N-terminus, the 79-residue chain is Cyclin-dependent kinases regulatory subunit 2 (79 aa).

Residue Lys-4 is modified to N6-acetyllysine.

The protein belongs to the CKS family. Forms a homohexamer that can probably bind six kinase subunits.

Its function is as follows. Binds to the catalytic subunit of the cyclin dependent kinases and is essential for their biological function. This Bos taurus (Bovine) protein is Cyclin-dependent kinases regulatory subunit 2 (CKS2).